We begin with the raw amino-acid sequence, 444 residues long: Docking protein 3 (444 aa).

Positions 7–123 (PVKDGLLYQQ…WMDPICQLAF (117 aa)) constitute a PH domain. Residues 47–66 (DVRDGGLGPGGDRPAGPGRR) are disordered. Phosphoserine is present on S138. In terms of domain architecture, IRS-type PTB spans 157-261 (EVAEFPVVVQ…ARQRERLPEL (105 aa)). A phosphoserine mark is found at S274, S308, and S314. Residue Y325 is modified to Phosphotyrosine. The interval 354–390 (GLSNGGPEAQEGPPGGRSPLGSPIYHNSEELSWPGSA) is disordered. Residues 358-376 (GGPEAQEGPPGGRSPLGSP) are compositionally biased toward low complexity. A Phosphoserine modification is found at S371.

This sequence belongs to the DOK family. Type A subfamily. As to quaternary structure, on tyrosine phosphorylation, interacts with CSK and INPP5D/SHIP1 via their SH2 domains. Binds ABL1 through the PTB domain and in a kinase-dependent manner. Does not interact with RasGAP. Post-translationally, constitutively tyrosine-phosphorylated. In terms of processing, on IL2 stimulation, phosphorylated on C-terminal tyrosine residues possibly by Src kinases. Can also be phosphorylated by ABL1 kinase.

It localises to the cytoplasm. Its subcellular location is the cell membrane. Functionally, DOK proteins are enzymatically inert adaptor or scaffolding proteins. They provide a docking platform for the assembly of multimolecular signaling complexes. DOK3 is a negative regulator of JNK signaling in B-cells through interaction with INPP5D/SHIP1. May modulate ABL1 function. This is Docking protein 3 (Dok3) from Rattus norvegicus (Rat).